The primary structure comprises 105 residues: U-scoloptoxin(05)-Ssd1a (105 aa).

The first 24 residues, 1-24 (MKEAVKMSCLCIFVFLFLFSLTDA), serve as a signal peptide directing secretion. The disordered stretch occupies residues 79-105 (HVPESNQKDGKVSTHMSSCNTDGCNAN). Residues 92 to 105 (THMSSCNTDGCNAN) show a composition bias toward polar residues.

It belongs to the scoloptoxin-05 family. In terms of processing, contains 4 disulfide bonds. As to expression, expressed by the venom gland.

The protein localises to the secreted. The protein is U-scoloptoxin(05)-Ssd1a of Scolopendra dehaani (Thai centipede).